The sequence spans 183 residues: Non-specific lipid transfer protein GPI-anchored 15 (183 aa).

The first 24 residues, 1 to 24, serve as a signal peptide directing secretion; sequence MGYRRSYAITFVALVAALWSVTKA. 4 cysteine pairs are disulfide-bonded: cysteine 30-cysteine 71, cysteine 40-cysteine 55, cysteine 56-cysteine 97, and cysteine 69-cysteine 107. N-linked (GlcNAc...) asparagine glycans are attached at residues asparagine 47 and asparagine 86. Residues 108-158 form a disordered region; sequence NAATGPTAQPPAPSPTEKTPDVTLTPTSLPGARSGVGGGSKTVPSVGTGSS. The segment covering 149–158 has biased composition (polar residues); sequence TVPSVGTGSS. The GPI-anchor amidated serine moiety is linked to residue serine 158. Positions 159-183 are cleaved as a propeptide — removed in mature form; it reads SRNVDPLPLHFLMFAVLVVCTSSFL.

Belongs to the plant LTP family. In terms of tissue distribution, expressed in seedlings, preferentially in the endodermis of hypocotyls and roots. Also observed in siliques.

Its subcellular location is the cell membrane. Probable lipid transfer protein. The polypeptide is Non-specific lipid transfer protein GPI-anchored 15 (Arabidopsis thaliana (Mouse-ear cress)).